Here is a 468-residue protein sequence, read N- to C-terminus: MSQGKIVQIIGAVVDVEFPRNEVPKVYHALKVDGTEITLEVQQQLGDGVVRTIALGSTDGLKRNLVATNTERAISVPVGAGTLGRIMDVLGRPIDEAGDVQASDHWEIHRGAPSYEDQSSSTELLETGIKVIDLMCPFAKGGKVGLFGGAGVGKTVNMMELINNIAKAHSGLSVFAGVGERTREGNDFYHEMKDSNVLDKVAMVYGQMNEPPGNRLRVALTGLTMAEYFRDEKDASGKGKDVLLFVDNIYRYTLAGTEVSALLGRMPSAVGYQPTLAEEMGVLQERITSTKSGSITSIQAVYVPADDLTDPSPATTFAHLDSTVTLSRNIASLGIYPAVDPLDSTSRQMDPLVIGHEHYDTAQRVQQTLQKYKELKDIIAILGMDELSEEDKQSVSRARKIERFFSQPFHVAEVFTGSPGKYVSLKDTIRGFKAICDGEYDHLPEQAFYMVGSIEEAVEKANKMSAKA.

An ATP-binding site is contributed by 148–155; that stretch reads GGAGVGKT.

It belongs to the ATPase alpha/beta chains family. As to quaternary structure, F-type ATPases have 2 components, CF(1) - the catalytic core - and CF(0) - the membrane proton channel. CF(1) has five subunits: alpha(3), beta(3), gamma(1), delta(1), epsilon(1). CF(0) has three main subunits: a(1), b(2) and c(9-12). The alpha and beta chains form an alternating ring which encloses part of the gamma chain. CF(1) is attached to CF(0) by a central stalk formed by the gamma and epsilon chains, while a peripheral stalk is formed by the delta and b chains.

It localises to the cell inner membrane. It carries out the reaction ATP + H2O + 4 H(+)(in) = ADP + phosphate + 5 H(+)(out). Functionally, produces ATP from ADP in the presence of a proton gradient across the membrane. The catalytic sites are hosted primarily by the beta subunits. In Xanthomonas axonopodis pv. citri (strain 306), this protein is ATP synthase subunit beta.